A 106-amino-acid chain; its full sequence is Large ribosomal subunit protein uL23 (106 aa).

Belongs to the universal ribosomal protein uL23 family. In terms of assembly, part of the 50S ribosomal subunit. Contacts protein L29, and trigger factor when it is bound to the ribosome.

In terms of biological role, one of the early assembly proteins it binds 23S rRNA. One of the proteins that surrounds the polypeptide exit tunnel on the outside of the ribosome. Forms the main docking site for trigger factor binding to the ribosome. The polypeptide is Large ribosomal subunit protein uL23 (Acinetobacter baumannii (strain AB307-0294)).